A 367-amino-acid chain; its full sequence is Probable protein phosphatase 2C 67 (367 aa).

The interval 1–79 (MAHQKREATS…DEKAATNSNV (79 aa)) is disordered. Positions 31–46 (AEKEHILTSDASHETN) are enriched in basic and acidic residues. Positions 91–365 (EADAAEDKGC…DNCTAVLIVF (275 aa)) constitute a PPM-type phosphatase domain. Mn(2+)-binding residues include Asp-131, Gly-132, Asp-312, and Asp-356.

This sequence belongs to the PP2C family. The cofactor is Mg(2+). Mn(2+) serves as cofactor.

The catalysed reaction is O-phospho-L-seryl-[protein] + H2O = L-seryl-[protein] + phosphate. It catalyses the reaction O-phospho-L-threonyl-[protein] + H2O = L-threonyl-[protein] + phosphate. The chain is Probable protein phosphatase 2C 67 from Oryza sativa subsp. japonica (Rice).